The sequence spans 140 residues: uncharacterized protein (140 aa).

This sequence belongs to the asfivirus D129L family.

This is an uncharacterized protein from African swine fever virus (isolate Pig/Kenya/KEN-50/1950) (ASFV).